Reading from the N-terminus, the 121-residue chain is Non-structural protein 8 (121 aa).

A signal peptide spans 1 to 15 (MKLLIVFGLLTSVYC). The SARS ORF8 Ig-like domain maps to 19-121 (ECSIQECCEN…HDVRVVLDFV (103 aa)). Intrachain disulfides connect Cys25–Cys90, Cys37–Cys102, and Cys61–Cys83.

This is Non-structural protein 8 from Bat coronavirus Rp3/2004 (BtCoV/Rp3/2004).